Reading from the N-terminus, the 451-residue chain is Probable metal transport system membrane protein CT_069 (451 aa).

Helical transmembrane passes span 14–34 (SFLA…ILLV), 38–58 (PLLS…GALL), 70–90 (WVII…ISFL), 100–120 (SALC…VSYV), 145–165 (TEAK…WWWY), 192–212 (VLVF…ILLI), 233–253 (ILIL…YFSV), and 269–289 (ILPT…LCLI). Residues 432–451 (PDYDPHQREIPKRTRKSDGC) form a disordered region. Positions 434 to 451 (YDPHQREIPKRTRKSDGC) are enriched in basic and acidic residues.

The protein belongs to the ABC-3 integral membrane protein family.

The protein localises to the cell inner membrane. In terms of biological role, part of an ATP-driven transport system CT_067/CT_068/CT_069/CT_070 for a metal. This is Probable metal transport system membrane protein CT_069 from Chlamydia trachomatis serovar D (strain ATCC VR-885 / DSM 19411 / UW-3/Cx).